The chain runs to 288 residues: Acetyl-coenzyme A carboxylase carboxyl transferase subunit beta (288 aa).

Positions 34–288 constitute a CoA carboxyltransferase N-terminal domain; it reads LFSKCPACKV…RLLRMHGGVR (255 aa). 4 residues coordinate Zn(2+): Cys-38, Cys-41, Cys-56, and Cys-59. The segment at 38 to 59 adopts a C4-type zinc-finger fold; it reads CPACKVILYKNDLGLEKTCQHC.

This sequence belongs to the AccD/PCCB family. In terms of assembly, acetyl-CoA carboxylase is a heterohexamer composed of biotin carboxyl carrier protein (AccB), biotin carboxylase (AccC) and two subunits each of ACCase subunit alpha (AccA) and ACCase subunit beta (AccD). It depends on Zn(2+) as a cofactor.

It localises to the cytoplasm. It carries out the reaction N(6)-carboxybiotinyl-L-lysyl-[protein] + acetyl-CoA = N(6)-biotinyl-L-lysyl-[protein] + malonyl-CoA. It participates in lipid metabolism; malonyl-CoA biosynthesis; malonyl-CoA from acetyl-CoA: step 1/1. In terms of biological role, component of the acetyl coenzyme A carboxylase (ACC) complex. Biotin carboxylase (BC) catalyzes the carboxylation of biotin on its carrier protein (BCCP) and then the CO(2) group is transferred by the transcarboxylase to acetyl-CoA to form malonyl-CoA. This is Acetyl-coenzyme A carboxylase carboxyl transferase subunit beta from Streptococcus suis (strain 98HAH33).